The sequence spans 279 residues: Digeranylgeranylglyceryl phosphate synthase (279 aa).

The next 9 membrane-spanning stretches (helical) occupy residues 16–36 (LIAG…LPPI), 40–60 (LLIF…NDYF), 77–99 (GALS…ILIA), 104–121 (FEAF…YLYA), 124–144 (LKPQ…ITPI), 146–166 (GAIA…AFLV), 192–212 (IVWG…ATII), 220–240 (AGIG…LWAA), and 259–279 (LKIA…TKGV).

This sequence belongs to the UbiA prenyltransferase family. DGGGP synthase subfamily. The cofactor is Mg(2+).

It is found in the cell membrane. The enzyme catalyses sn-3-O-(geranylgeranyl)glycerol 1-phosphate + (2E,6E,10E)-geranylgeranyl diphosphate = 2,3-bis-O-(geranylgeranyl)-sn-glycerol 1-phosphate + diphosphate. Its pathway is membrane lipid metabolism; glycerophospholipid metabolism. Its function is as follows. Prenyltransferase that catalyzes the transfer of the geranylgeranyl moiety of geranylgeranyl diphosphate (GGPP) to the C2 hydroxyl of (S)-3-O-geranylgeranylglyceryl phosphate (GGGP). This reaction is the second ether-bond-formation step in the biosynthesis of archaeal membrane lipids. In Thermococcus sibiricus (strain DSM 12597 / MM 739), this protein is Digeranylgeranylglyceryl phosphate synthase.